The chain runs to 394 residues: Purine ribonucleoside efflux pump NepI (394 aa).

The Cytoplasmic segment spans residues 1 to 21 (MSEFIAENRGADAITRPNWSA). The chain crosses the membrane as a helical span at residues 22–42 (VFSVAFCVACLIIVEFLPVSL). The Periplasmic segment spans residues 43–54 (LTPMAQDLGISE). Residues 55–75 (GVAGQSVTVTAFVAMFASLFI) traverse the membrane as a helical segment. Topologically, residues 76-85 (TQTIQATDRR) are cytoplasmic. Residues 86–106 (YVVILFAVLLTISCLLVSFAN) traverse the membrane as a helical segment. A topological domain (periplasmic) is located at residue Ser107. A helical transmembrane segment spans residues 108–128 (FSLLLIGRACLGLALGGFWAM). Topologically, residues 129 to 147 (SASLTMRLVPPRTVPKALS) are cytoplasmic. The chain crosses the membrane as a helical span at residues 148–168 (VIFGAVSIALVIAAPLGSFLG). At 169-175 (ELIGWRN) the chain is on the periplasmic side. A helical transmembrane segment spans residues 176–196 (VFNAAAVMGVLCIFWIIKSLP). At 197-215 (SLPGKPSHQKQNTFRLLQR) the chain is on the cytoplasmic side. A helical membrane pass occupies residues 216–236 (PGVMAGMIAIFMSFAGQFAFF). Topologically, residues 237–255 (TYIRPVYMNLAGFGVDGLT) are periplasmic. The helical transmembrane segment at 256-276 (LVLLSFGIASFIGTSLSSFIL) threads the bilayer. Residues 277 to 281 (KRSVK) are Cytoplasmic-facing. The chain crosses the membrane as a helical span at residues 282-302 (LALAGAPLILAVSALVLTLCG). Topologically, residues 303-305 (SDK) are periplasmic. Residues 306-326 (IVATGVAIIWGLTFALVPVGW) form a helical membrane-spanning segment. Residues 327 to 343 (STWSTRSLADQAEKAGS) lie on the Cytoplasmic side of the membrane. A helical transmembrane segment spans residues 344-364 (IQVAVIQLANTCGAAIGGYAL). Residues 365–366 (DN) are Periplasmic-facing. A helical membrane pass occupies residues 367-387 (IGLTSPLMLSGTLMLLTALLV). The Cytoplasmic segment spans residues 388 to 394 (TAKVKMK).

The protein belongs to the major facilitator superfamily. DHA1 family. NepI (TC 2.A.1.2.26) subfamily.

It is found in the cell inner membrane. The enzyme catalyses inosine(in) + H(+)(out) = inosine(out) + H(+)(in). It carries out the reaction guanosine(in) + H(+)(out) = guanosine(out) + H(+)(in). Functionally, involved in the efflux of purine ribonucleosides, such as inosine and guanosine. In Shigella dysenteriae serotype 1 (strain Sd197), this protein is Purine ribonucleoside efflux pump NepI.